The primary structure comprises 227 residues: Casparian strip membrane protein 2 (227 aa).

The Cytoplasmic portion of the chain corresponds to 1-59; sequence MSSTSEATVIHMDGAAGKTPATAVPPPPPPAPTAPVQQQRKAGGVPFLLRSGAEGFRRC. The disordered stretch occupies residues 17-37; that stretch reads GKTPATAVPPPPPPAPTAPVQ. A compositionally biased stretch (pro residues) spans 23–33; the sequence is AVPPPPPPAPT. A helical membrane pass occupies residues 60 to 80; that stretch reads MALLDLLLRVAAMGPTLAAAI. Topologically, residues 81 to 107 are extracellular; sequence STGTSDETLSVFTHYFQFRARFDDFSA. Residues 108–128 traverse the membrane as a helical segment; sequence FTFFMVANAVAAGYLLMSLPF. The Cytoplasmic portion of the chain corresponds to 129–149; the sequence is SAFGVIRPKATSVRLLLLICD. Residues 150–170 traverse the membrane as a helical segment; that stretch reads TIMVVLVTAAASAAAAIVYVA. Residues 171-197 are Extracellular-facing; that stretch reads HEGNRRANWVPICMQFHGFCKRTSGAV. Residues 198-218 traverse the membrane as a helical segment; that stretch reads VASFLAVLIFILLVFLGACAI. The Cytoplasmic portion of the chain corresponds to 219–227; it reads RRRHTTTKH.

The protein belongs to the Casparian strip membrane proteins (CASP) family. In terms of assembly, homodimer and heterodimers.

Its subcellular location is the cell membrane. In terms of biological role, regulates membrane-cell wall junctions and localized cell wall deposition. Required for establishment of the Casparian strip membrane domain (CSD) and the subsequent formation of Casparian strips, a cell wall modification of the root endodermis that determines an apoplastic barrier between the intraorganismal apoplasm and the extraorganismal apoplasm and prevents lateral diffusion. This chain is Casparian strip membrane protein 2, found in Brachypodium distachyon (Purple false brome).